The following is a 437-amino-acid chain: GTPase Era, mitochondrial (437 aa).

The transit peptide at Met1–Cys43 directs the protein to the mitochondrion. Residues Arg112–Gly330 enclose the Era-type G domain. Residues Gly120–Ser127 form a G1 region. Position 120–127 (Gly120–Ser127) interacts with GTP. A G2 region spans residues His146–Ser150. The G3 stretch occupies residues Asp167–Gly170. Asp167 to Leu171 is a binding site for GTP. Ser173 bears the Phosphoserine mark. GTP is bound at residue Asn236–Asp239. Positions Asn236–Asp239 are G4. The interval Leu264–Gln296 is disordered. The segment at Leu308–Ala310 is G5. Residues Leu360 to Lys437 enclose the KH type-2 domain.

Belongs to the TRAFAC class TrmE-Era-EngA-EngB-Septin-like GTPase superfamily. Era GTPase family.

It is found in the mitochondrion matrix. Its subcellular location is the mitochondrion inner membrane. In terms of biological role, probable GTPase that plays a role in the mitochondrial ribosomal small subunit assembly. Specifically binds the 12S mitochondrial rRNA (12S mt-rRNA) to a 33 nucleotide section delineating the 3' terminal stem-loop region. May act as a chaperone that protects the 12S mt-rRNA on the 28S mitoribosomal subunit during ribosomal small subunit assembly. The sequence is that of GTPase Era, mitochondrial (ERAL1) from Bos taurus (Bovine).